Consider the following 126-residue polypeptide: Small ribosomal subunit protein eS24 (126 aa).

The disordered stretch occupies residues 98–126 (LYTKPQTSRKQRKEKKNRLKKAGKKTAKK). Over residues 104–126 (TSRKQRKEKKNRLKKAGKKTAKK) the composition is skewed to basic residues.

The protein belongs to the eukaryotic ribosomal protein eS24 family.

The protein is Small ribosomal subunit protein eS24 (rps24) of Dictyostelium discoideum (Social amoeba).